The chain runs to 311 residues: Bifunctional protein FolD (311 aa).

174 to 176 contacts NADP(+); it reads GKG.

This sequence belongs to the tetrahydrofolate dehydrogenase/cyclohydrolase family. Homodimer.

It catalyses the reaction (6R)-5,10-methylene-5,6,7,8-tetrahydrofolate + NADP(+) = (6R)-5,10-methenyltetrahydrofolate + NADPH. The catalysed reaction is (6R)-5,10-methenyltetrahydrofolate + H2O = (6R)-10-formyltetrahydrofolate + H(+). It functions in the pathway one-carbon metabolism; tetrahydrofolate interconversion. Its function is as follows. Catalyzes the oxidation of 5,10-methylenetetrahydrofolate to 5,10-methenyltetrahydrofolate and then the hydrolysis of 5,10-methenyltetrahydrofolate to 10-formyltetrahydrofolate. The protein is Bifunctional protein FolD of Pyrobaculum islandicum (strain DSM 4184 / JCM 9189 / GEO3).